The following is a 224-amino-acid chain: ATP phosphoribosyltransferase (224 aa).

It belongs to the ATP phosphoribosyltransferase family. Short subfamily. As to quaternary structure, heteromultimer composed of HisG and HisZ subunits.

The protein resides in the cytoplasm. The enzyme catalyses 1-(5-phospho-beta-D-ribosyl)-ATP + diphosphate = 5-phospho-alpha-D-ribose 1-diphosphate + ATP. The protein operates within amino-acid biosynthesis; L-histidine biosynthesis; L-histidine from 5-phospho-alpha-D-ribose 1-diphosphate: step 1/9. Functionally, catalyzes the condensation of ATP and 5-phosphoribose 1-diphosphate to form N'-(5'-phosphoribosyl)-ATP (PR-ATP). Has a crucial role in the pathway because the rate of histidine biosynthesis seems to be controlled primarily by regulation of HisG enzymatic activity. The protein is ATP phosphoribosyltransferase of Cupriavidus taiwanensis (strain DSM 17343 / BCRC 17206 / CCUG 44338 / CIP 107171 / LMG 19424 / R1) (Ralstonia taiwanensis (strain LMG 19424)).